We begin with the raw amino-acid sequence, 90 residues long: MGISPWTLLIVLLIVLLVFGTKKLRNMGTDMGGAIKGFKDAMKEGEEGAKEGEKSEPSKLEQPPEEEKESGEGHTIEGERSEQPRDRHSS.

A helical membrane pass occupies residues 1–21 (MGISPWTLLIVLLIVLLVFGT). Basic and acidic residues-rich tracts occupy residues 42–59 (MKEGEEGAKEGEKSEPSK) and 70–90 (SGEGHTIEGERSEQPRDRHSS). Positions 42–90 (MKEGEEGAKEGEKSEPSKLEQPPEEEKESGEGHTIEGERSEQPRDRHSS) are disordered.

Belongs to the TatA/E family. The Tat system comprises two distinct complexes: a TatABC complex, containing multiple copies of TatA, TatB and TatC subunits, and a separate TatA complex, containing only TatA subunits. Substrates initially bind to the TatABC complex, which probably triggers association of the separate TatA complex to form the active translocon.

It is found in the cell inner membrane. Part of the twin-arginine translocation (Tat) system that transports large folded proteins containing a characteristic twin-arginine motif in their signal peptide across membranes. TatA could form the protein-conducting channel of the Tat system. This Alkalilimnicola ehrlichii (strain ATCC BAA-1101 / DSM 17681 / MLHE-1) protein is Sec-independent protein translocase protein TatA.